A 220-amino-acid chain; its full sequence is Urease accessory protein UreF (220 aa).

Belongs to the UreF family. UreD, UreF and UreG form a complex that acts as a GTP-hydrolysis-dependent molecular chaperone, activating the urease apoprotein by helping to assemble the nickel containing metallocenter of UreC. The UreE protein probably delivers the nickel.

The protein localises to the cytoplasm. Functionally, required for maturation of urease via the functional incorporation of the urease nickel metallocenter. This chain is Urease accessory protein UreF, found in Jannaschia sp. (strain CCS1).